A 414-amino-acid polypeptide reads, in one-letter code: Cyclohex-1-ene-1-carbonyl-CoA dehydrogenase (414 aa).

Catalysis depends on Asp124, which acts as the Proton acceptor. Residues Ala157, Thr158, Ser164, and Thr190 each coordinate FAD. Cyclohex-1-ene-1-carbonyl-CoA is bound at residue Ser164. Ser164 serves as a coordination point for cyclohexa-1,5-diene-1-carbonyl-CoA. Cyclohex-1-ene-1-carbonyl-CoA is bound by residues Lys211, Arg275, and Thr396. Cyclohexa-1,5-diene-1-carbonyl-CoA is bound by residues Lys211, Arg275, and Thr396. Positions 398 and 400 each coordinate FAD. Residue Arg408 participates in cyclohex-1-ene-1-carbonyl-CoA binding. Arg408 is a binding site for cyclohexa-1,5-diene-1-carbonyl-CoA.

This sequence belongs to the acyl-CoA dehydrogenase family. In terms of assembly, homotetramer. It depends on FAD as a cofactor.

The catalysed reaction is cyclohex-1-ene-1-carbonyl-CoA + oxidized [electron-transfer flavoprotein] + H(+) = cyclohexa-1,5-diene-1-carbonyl-CoA + reduced [electron-transfer flavoprotein]. Functionally, mediates the conversion of cyclohex-1-ene-1-carbonyl-CoA (Ch1CoA) into (E)-2-cyclohex-1,5-diene-1-carbonyl-CoA in biosynthesis of cyclohexane-1-carboxylate, a by-product produced during fermentation of benzoate and crotonate to acetate. Also able to further convert (E)-2-cyclohex-1,5-diene-1-carbonyl-CoA to benzoyl-CoA. In Syntrophus aciditrophicus (strain SB), this protein is Cyclohex-1-ene-1-carbonyl-CoA dehydrogenase.